The chain runs to 200 residues: Recombination protein RecR (200 aa).

The segment at 57 to 72 adopts a C4-type zinc-finger fold; the sequence is CRQCRTLTEEELCPQC. A Toprim domain is found at 80–175; that stretch reads TLLCVVEGPM…ITSRIAHGVP (96 aa).

Belongs to the RecR family.

May play a role in DNA repair. It seems to be involved in an RecBC-independent recombinational process of DNA repair. It may act with RecF and RecO. The protein is Recombination protein RecR of Pseudomonas fluorescens (strain SBW25).